Here is a 288-residue protein sequence, read N- to C-terminus: UTP--glucose-1-phosphate uridylyltransferase (288 aa).

This sequence belongs to the UDPGP type 2 family.

It catalyses the reaction alpha-D-glucose 1-phosphate + UTP + H(+) = UDP-alpha-D-glucose + diphosphate. The protein operates within glycolipid metabolism; diglucosyl-diacylglycerol biosynthesis. Functionally, catalyzes the formation of UDP-glucose from glucose-1-phosphate and UTP. This is an intermediate step in the biosynthesis of diglucosyl-diacylglycerol (Glc2-DAG), i.e. the predominant glycolipid found in the S.aureus membrane, which is also used as a membrane anchor for lipoteichoic acid (LTA). The sequence is that of UTP--glucose-1-phosphate uridylyltransferase (gtaB) from Staphylococcus aureus (strain MRSA252).